Consider the following 573-residue polypeptide: Adenine deaminase (573 aa).

It belongs to the metallo-dependent hydrolases superfamily. Adenine deaminase family. Mn(2+) serves as cofactor.

The enzyme catalyses adenine + H2O + H(+) = hypoxanthine + NH4(+). This chain is Adenine deaminase, found in Bacillus licheniformis (strain ATCC 14580 / DSM 13 / JCM 2505 / CCUG 7422 / NBRC 12200 / NCIMB 9375 / NCTC 10341 / NRRL NRS-1264 / Gibson 46).